The primary structure comprises 296 residues: Ribosomal protein L11 methyltransferase (296 aa).

The S-adenosyl-L-methionine site is built by Thr-146, Gly-167, Asp-189, and Asn-231.

This sequence belongs to the methyltransferase superfamily. PrmA family.

It localises to the cytoplasm. It catalyses the reaction L-lysyl-[protein] + 3 S-adenosyl-L-methionine = N(6),N(6),N(6)-trimethyl-L-lysyl-[protein] + 3 S-adenosyl-L-homocysteine + 3 H(+). Its function is as follows. Methylates ribosomal protein L11. In Haemophilus influenzae (strain ATCC 51907 / DSM 11121 / KW20 / Rd), this protein is Ribosomal protein L11 methyltransferase.